Here is a 221-residue protein sequence, read N- to C-terminus: Phosphoribosylformylglycinamidine synthase subunit PurQ (221 aa).

The Glutamine amidotransferase type-1 domain maps to 3-221; that stretch reads AAVLVFPGSN…MFASLMQVMA (219 aa). The active-site Nucleophile is C87. Residues H195 and E197 contribute to the active site.

Part of the FGAM synthase complex composed of 1 PurL, 1 PurQ and 2 PurS subunits.

It localises to the cytoplasm. The enzyme catalyses N(2)-formyl-N(1)-(5-phospho-beta-D-ribosyl)glycinamide + L-glutamine + ATP + H2O = 2-formamido-N(1)-(5-O-phospho-beta-D-ribosyl)acetamidine + L-glutamate + ADP + phosphate + H(+). The catalysed reaction is L-glutamine + H2O = L-glutamate + NH4(+). Its pathway is purine metabolism; IMP biosynthesis via de novo pathway; 5-amino-1-(5-phospho-D-ribosyl)imidazole from N(2)-formyl-N(1)-(5-phospho-D-ribosyl)glycinamide: step 1/2. Part of the phosphoribosylformylglycinamidine synthase complex involved in the purines biosynthetic pathway. Catalyzes the ATP-dependent conversion of formylglycinamide ribonucleotide (FGAR) and glutamine to yield formylglycinamidine ribonucleotide (FGAM) and glutamate. The FGAM synthase complex is composed of three subunits. PurQ produces an ammonia molecule by converting glutamine to glutamate. PurL transfers the ammonia molecule to FGAR to form FGAM in an ATP-dependent manner. PurS interacts with PurQ and PurL and is thought to assist in the transfer of the ammonia molecule from PurQ to PurL. The polypeptide is Phosphoribosylformylglycinamidine synthase subunit PurQ (Zymomonas mobilis subsp. mobilis (strain ATCC 31821 / ZM4 / CP4)).